The chain runs to 920 residues: Puromycin-sensitive aminopeptidase (920 aa).

Residues glutamate 181 and 317–321 contribute to the substrate site; that span reads GAMEN. A Zn(2+)-binding site is contributed by histidine 353. Residue glutamate 354 is the Proton acceptor of the active site. Positions 357 and 376 each coordinate Zn(2+). Residue tyrosine 465 is modified to 3'-nitrotyrosine. Positions 727-731 match the Nuclear localization signal motif; that stretch reads RRRFK.

The protein belongs to the peptidase M1 family. As to quaternary structure, monomer. Requires Zn(2+) as cofactor. Widely expressed. Highest expression in brain, particularly the striatum and hippocampus. Expressed in Sertoli cells.

The protein resides in the cytoplasm. The protein localises to the cytosol. It localises to the nucleus. The enzyme catalyses Release of an N-terminal amino acid, preferentially alanine, from a wide range of peptides, amides and arylamides.. Strongly inhibited by bestatin, leuhistin, actinonin, amastatin, 1,10-phenanthroline, DFP, PCMBS, Zn(2+), Cd(2+), Co(2+), Cu(2+), Hg(2+), EDTA and puromycin. Not inhibited by PMSF, and only slightly inhibited by leupeptin and aprotinin. Activity is increased by Mg(2+) and Ca(2+). Aminopeptidase with broad substrate specificity for several peptides. Involved in proteolytic events essential for cell growth and viability. May act as regulator of neuropeptide activity. Plays a role in the antigen-processing pathway for MHC class I molecules. Involved in the N-terminal trimming of cytotoxic T-cell epitope precursors. Digests the poly-Q peptides found in many cellular proteins. The sequence is that of Puromycin-sensitive aminopeptidase (Npepps) from Mus musculus (Mouse).